A 107-amino-acid polypeptide reads, in one-letter code: Large ribosomal subunit protein uL24 (107 aa).

Belongs to the universal ribosomal protein uL24 family. In terms of assembly, part of the 50S ribosomal subunit.

Functionally, one of two assembly initiator proteins, it binds directly to the 5'-end of the 23S rRNA, where it nucleates assembly of the 50S subunit. In terms of biological role, one of the proteins that surrounds the polypeptide exit tunnel on the outside of the subunit. The sequence is that of Large ribosomal subunit protein uL24 from Pelotomaculum thermopropionicum (strain DSM 13744 / JCM 10971 / SI).